The primary structure comprises 170 residues: UPF0201 protein MJ1564 (170 aa).

The span at 133-148 (NEDELEEEEEKEDSEE) shows a compositional bias: acidic residues. The segment at 133–170 (NEDELEEEEEKEDSEEIKEGHKEENNLKIKVIDNSSGD) is disordered. A compositionally biased stretch (basic and acidic residues) spans 149 to 163 (IKEGHKEENNLKIKV).

Belongs to the UPF0201 family.

The polypeptide is UPF0201 protein MJ1564 (Methanocaldococcus jannaschii (strain ATCC 43067 / DSM 2661 / JAL-1 / JCM 10045 / NBRC 100440) (Methanococcus jannaschii)).